Reading from the N-terminus, the 1009-residue chain is Adhesion G-protein coupled receptor G2 (1009 aa).

Positions M1–S37 are cleaved as a signal peptide. Topologically, residues L38–M617 are extracellular. N-linked (GlcNAc...) asparagine glycosylation is found at N43, N77, N91, N103, N109, N127, N136, N154, N178, and N186. Disordered regions lie at residues M279–P305 and S325–P346. A compositionally biased stretch (polar residues) spans T280 to P293. Residues N362, N427, N448, N453, N520, N534, N539, N543, and N589 are each glycosylated (N-linked (GlcNAc...) asparagine). In terms of domain architecture, GAIN-B spans N453–S611. Disulfide bonds link C562/C593 and C581/C595. The GPS stretch occupies residues C562–S611. Positions S600–S611 are stachel. Residues M618–V640 traverse the membrane as a helical segment. Over T641–K655 the chain is Cytoplasmic. A helical membrane pass occupies residues I656–L679. Topologically, residues Y680–R683 are extracellular. The helical transmembrane segment at G684–F709 threads the bilayer. A disulfide bond links C686 and C770. The Cytoplasmic segment spans residues H710 to L728. The helical transmembrane segment at K729–D751 threads the bilayer. Topologically, residues N752–V776 are extracellular. Residues V777–V802 form a helical membrane-spanning segment. Topologically, residues Q803–D823 are cytoplasmic. A helical membrane pass occupies residues L824–W845. Topologically, residues G846–V850 are extracellular. N849 carries N-linked (GlcNAc...) asparagine glycosylation. A helical transmembrane segment spans residues T851–C872. N860 provides a ligand contact to 3beta-hydroxyandrost-5-en-17-one. The Cytoplasmic segment spans residues A873–M1009. S1002 is subject to Phosphoserine.

This sequence belongs to the G-protein coupled receptor 2 family. Adhesion G-protein coupled receptor (ADGR) subfamily. As to quaternary structure, heterodimer of 2 chains generated by proteolytic processing; the large extracellular N-terminal fragment and the membrane-bound C-terminal fragment predominantly remain associated and non-covalently linked. Interacts with CFTR. In terms of processing, proteolytically cleaved into 2 subunits, an extracellular subunit and a seven-transmembrane subunit. Highly glycosylated. As to expression, epididymis-specific expression (at protein level). Associated with apical membranes of efferent ductule and proximal epididymal duct epithelia. Mainly expressed in the nonciliated principal cells of the proximal excurrent ducts.

The protein localises to the apical cell membrane. Its activity is regulated as follows. Forms a heterodimer of 2 chains generated by proteolytic processing that remain associated through non-covalent interactions mediated by the GAIN-B domain. In the inactivated receptor, the Stachel sequence (also named stalk) is embedded in the GAIN-B domain, where it adopts a beta-strand conformation. On activation, the Stachel moves into the 7 transmembrane region and adopts a twisted hook-shaped configuration that forms contacts within the receptor, leading to coupling of a G-alpha protein, which activates signaling. The cleaved GAIN-B and N-terminal domains can then dissociate from the rest of the receptor. Deoxycorticosterone (DOC) acts as an antagonist of ADGRG2. Functionally, adhesion G-protein coupled receptor (aGPCR) for steroid hormones, such as dehydroepiandrosterone (DHEA; also named 3beta-hydroxyandrost-5-en-17-one) and androstenedione. Involved in a signal transduction pathway controlling epididymal function and male fertility. Ligand binding causes a conformation change that triggers signaling via guanine nucleotide-binding proteins (G proteins) and modulates the activity of downstream effectors, such as adenylate cyclase. ADGRG2 is coupled to G(s) G proteins and mediates activation of adenylate cyclase activity. Also able to couple with G(q) G proteins in vitro. May regulate fluid exchange within epididymis. This is Adhesion G-protein coupled receptor G2 from Mus musculus (Mouse).